The chain runs to 107 residues: Nucleoid-associated protein amb4104 (107 aa).

The protein belongs to the YbaB/EbfC family. Homodimer.

It localises to the cytoplasm. It is found in the nucleoid. In terms of biological role, binds to DNA and alters its conformation. May be involved in regulation of gene expression, nucleoid organization and DNA protection. The polypeptide is Nucleoid-associated protein amb4104 (Paramagnetospirillum magneticum (strain ATCC 700264 / AMB-1) (Magnetospirillum magneticum)).